We begin with the raw amino-acid sequence, 349 residues long: Anthranilate phosphoribosyltransferase (349 aa).

5-phospho-alpha-D-ribose 1-diphosphate contacts are provided by residues glycine 82, 85–86 (GD), 92–95 (NVST), 110–118 (KHGNRAVSG), and serine 122. Glycine 82 is an anthranilate binding site. Serine 94 provides a ligand contact to Mg(2+). Asparagine 113 is a binding site for anthranilate. Position 168 (arginine 168) interacts with anthranilate. Residues aspartate 227 and glutamate 228 each contribute to the Mg(2+) site.

The protein belongs to the anthranilate phosphoribosyltransferase family. Homodimer. Mg(2+) is required as a cofactor.

The enzyme catalyses N-(5-phospho-beta-D-ribosyl)anthranilate + diphosphate = 5-phospho-alpha-D-ribose 1-diphosphate + anthranilate. It functions in the pathway amino-acid biosynthesis; L-tryptophan biosynthesis; L-tryptophan from chorismate: step 2/5. Catalyzes the transfer of the phosphoribosyl group of 5-phosphorylribose-1-pyrophosphate (PRPP) to anthranilate to yield N-(5'-phosphoribosyl)-anthranilate (PRA). This chain is Anthranilate phosphoribosyltransferase, found in Pseudomonas entomophila (strain L48).